We begin with the raw amino-acid sequence, 378 residues long: Glutamate 5-kinase (378 aa).

Lys-21 provides a ligand contact to ATP. 3 residues coordinate substrate: Ser-61, Asp-148, and Asn-160. 180–181 (TD) serves as a coordination point for ATP. One can recognise a PUA domain in the interval 286 to 364 (RGTLVLDAGA…RRIEELLGYM (79 aa)).

This sequence belongs to the glutamate 5-kinase family.

The protein localises to the cytoplasm. The enzyme catalyses L-glutamate + ATP = L-glutamyl 5-phosphate + ADP. It participates in amino-acid biosynthesis; L-proline biosynthesis; L-glutamate 5-semialdehyde from L-glutamate: step 1/2. Catalyzes the transfer of a phosphate group to glutamate to form L-glutamate 5-phosphate. In Chromohalobacter salexigens (strain ATCC BAA-138 / DSM 3043 / CIP 106854 / NCIMB 13768 / 1H11), this protein is Glutamate 5-kinase.